A 309-amino-acid chain; its full sequence is tRNA dimethylallyltransferase (309 aa).

10–17 contributes to the ATP binding site; that stretch reads GPTAVGKT. 12–17 is a substrate binding site; the sequence is TAVGKT. Positions 35 to 38 are interaction with substrate tRNA; sequence DSMQ.

This sequence belongs to the IPP transferase family. As to quaternary structure, monomer. Requires Mg(2+) as cofactor.

It catalyses the reaction adenosine(37) in tRNA + dimethylallyl diphosphate = N(6)-dimethylallyladenosine(37) in tRNA + diphosphate. Catalyzes the transfer of a dimethylallyl group onto the adenine at position 37 in tRNAs that read codons beginning with uridine, leading to the formation of N6-(dimethylallyl)adenosine (i(6)A). This Clostridium botulinum (strain Alaska E43 / Type E3) protein is tRNA dimethylallyltransferase.